We begin with the raw amino-acid sequence, 342 residues long: tRNA N6-adenosine threonylcarbamoyltransferase (342 aa).

Fe cation-binding residues include histidine 114 and histidine 118. Substrate is bound by residues 136–140 (LVSGG), aspartate 169, glycine 182, aspartate 186, and asparagine 275. Aspartate 301 serves as a coordination point for Fe cation.

Belongs to the KAE1 / TsaD family. It depends on Fe(2+) as a cofactor.

It localises to the cytoplasm. It catalyses the reaction L-threonylcarbamoyladenylate + adenosine(37) in tRNA = N(6)-L-threonylcarbamoyladenosine(37) in tRNA + AMP + H(+). Required for the formation of a threonylcarbamoyl group on adenosine at position 37 (t(6)A37) in tRNAs that read codons beginning with adenine. Is involved in the transfer of the threonylcarbamoyl moiety of threonylcarbamoyl-AMP (TC-AMP) to the N6 group of A37, together with TsaE and TsaB. TsaD likely plays a direct catalytic role in this reaction. The polypeptide is tRNA N6-adenosine threonylcarbamoyltransferase (Streptococcus pyogenes serotype M18 (strain MGAS8232)).